Here is a 744-residue protein sequence, read N- to C-terminus: Catalase-peroxidase (744 aa).

The interval 1–21 (MANESKCPFHQTAGGGTSNRD) is disordered. Residues 91–241 (WHSAGTYRIG…LAAVQMGLIY (151 aa)) constitute a cross-link (tryptophyl-tyrosyl-methioninium (Trp-Tyr) (with M-267)). Residue histidine 92 is the Proton acceptor of the active site. Positions 241–267 (YVNPEGPEGNPDPVASGKDIRDTFGRM) form a cross-link, tryptophyl-tyrosyl-methioninium (Tyr-Met) (with W-91). Histidine 282 provides a ligand contact to heme b. Residues 361–387 (GAHQWRPKDGKGANTVPDAHDTTKRHA) form a disordered region.

It belongs to the peroxidase family. Peroxidase/catalase subfamily. As to quaternary structure, homodimer or homotetramer. Requires heme b as cofactor. Post-translationally, formation of the three residue Trp-Tyr-Met cross-link is important for the catalase, but not the peroxidase activity of the enzyme.

It carries out the reaction H2O2 + AH2 = A + 2 H2O. The enzyme catalyses 2 H2O2 = O2 + 2 H2O. Bifunctional enzyme with both catalase and broad-spectrum peroxidase activity. This Pseudomonas entomophila (strain L48) protein is Catalase-peroxidase.